Here is a 408-residue protein sequence, read N- to C-terminus: Arginine biosynthesis bifunctional protein ArgJ (408 aa).

Positions 158, 184, 195, 281, 403, and 408 each coordinate substrate. Residue Thr195 is the Nucleophile of the active site.

Belongs to the ArgJ family. Heterotetramer of two alpha and two beta chains.

The protein resides in the cytoplasm. It carries out the reaction N(2)-acetyl-L-ornithine + L-glutamate = N-acetyl-L-glutamate + L-ornithine. It catalyses the reaction L-glutamate + acetyl-CoA = N-acetyl-L-glutamate + CoA + H(+). It functions in the pathway amino-acid biosynthesis; L-arginine biosynthesis; L-ornithine and N-acetyl-L-glutamate from L-glutamate and N(2)-acetyl-L-ornithine (cyclic): step 1/1. Its pathway is amino-acid biosynthesis; L-arginine biosynthesis; N(2)-acetyl-L-ornithine from L-glutamate: step 1/4. Its function is as follows. Catalyzes two activities which are involved in the cyclic version of arginine biosynthesis: the synthesis of N-acetylglutamate from glutamate and acetyl-CoA as the acetyl donor, and of ornithine by transacetylation between N(2)-acetylornithine and glutamate. In Bacillus cereus (strain ATCC 14579 / DSM 31 / CCUG 7414 / JCM 2152 / NBRC 15305 / NCIMB 9373 / NCTC 2599 / NRRL B-3711), this protein is Arginine biosynthesis bifunctional protein ArgJ.